Reading from the N-terminus, the 141-residue chain is Nucleoside triphosphatase NudI (141 aa).

Residues 1–141 (MRQRTIVCPL…RHTLALKGLL (141 aa)) form the Nudix hydrolase domain. Residues 38-59 (GGVEPGERIEEALRREIREELG) carry the Nudix box motif.

This sequence belongs to the Nudix hydrolase family. NudI subfamily. Monomer. The cofactor is Mg(2+).

It carries out the reaction a ribonucleoside 5'-triphosphate + H2O = a ribonucleoside 5'-phosphate + diphosphate + H(+). The enzyme catalyses a 2'-deoxyribonucleoside 5'-triphosphate + H2O = a 2'-deoxyribonucleoside 5'-phosphate + diphosphate + H(+). It catalyses the reaction dUTP + H2O = dUMP + diphosphate + H(+). The catalysed reaction is dTTP + H2O = dTMP + diphosphate + H(+). It carries out the reaction dCTP + H2O = dCMP + diphosphate + H(+). Catalyzes the hydrolysis of nucleoside triphosphates, with a preference for pyrimidine deoxynucleoside triphosphates (dUTP, dTTP and dCTP). This chain is Nucleoside triphosphatase NudI, found in Salmonella heidelberg (strain SL476).